The following is a 388-amino-acid chain: tRNA(Ile)-lysidine synthase (388 aa).

51–56 (SGGRDS) is a binding site for ATP.

It belongs to the tRNA(Ile)-lysidine synthase family.

It localises to the cytoplasm. It catalyses the reaction cytidine(34) in tRNA(Ile2) + L-lysine + ATP = lysidine(34) in tRNA(Ile2) + AMP + diphosphate + H(+). Functionally, ligates lysine onto the cytidine present at position 34 of the AUA codon-specific tRNA(Ile) that contains the anticodon CAU, in an ATP-dependent manner. Cytidine is converted to lysidine, thus changing the amino acid specificity of the tRNA from methionine to isoleucine. This chain is tRNA(Ile)-lysidine synthase, found in Bifidobacterium longum subsp. infantis (strain ATCC 15697 / DSM 20088 / JCM 1222 / NCTC 11817 / S12).